A 207-amino-acid chain; its full sequence is Holliday junction branch migration complex subunit RuvA (207 aa).

The interval 1-65 (MIGRIRGVIL…EDAQLLYGFN (65 aa)) is domain I. A domain II region spans residues 66–143 (QKQERALFRE…KGLNGDLFEQ (78 aa)). The flexible linker stretch occupies residues 144-158 (NGDIELPASASSKAP). A domain III region spans residues 159-207 (SAADIEAEASAALIALGYKPQEAAKMISRVATAGADSETLIKEALRAAI).

The protein belongs to the RuvA family. As to quaternary structure, homotetramer. Forms an RuvA(8)-RuvB(12)-Holliday junction (HJ) complex. HJ DNA is sandwiched between 2 RuvA tetramers; dsDNA enters through RuvA and exits via RuvB. An RuvB hexamer assembles on each DNA strand where it exits the tetramer. Each RuvB hexamer is contacted by two RuvA subunits (via domain III) on 2 adjacent RuvB subunits; this complex drives branch migration. In the full resolvosome a probable DNA-RuvA(4)-RuvB(12)-RuvC(2) complex forms which resolves the HJ.

The protein localises to the cytoplasm. In terms of biological role, the RuvA-RuvB-RuvC complex processes Holliday junction (HJ) DNA during genetic recombination and DNA repair, while the RuvA-RuvB complex plays an important role in the rescue of blocked DNA replication forks via replication fork reversal (RFR). RuvA specifically binds to HJ cruciform DNA, conferring on it an open structure. The RuvB hexamer acts as an ATP-dependent pump, pulling dsDNA into and through the RuvAB complex. HJ branch migration allows RuvC to scan DNA until it finds its consensus sequence, where it cleaves and resolves the cruciform DNA. This is Holliday junction branch migration complex subunit RuvA from Proteus mirabilis (strain HI4320).